The primary structure comprises 165 residues: Phosphopantetheine adenylyltransferase (165 aa).

A substrate-binding site is contributed by Ser-10. Residues 10 to 11 (SF) and His-18 contribute to the ATP site. Substrate is bound by residues Lys-42, Thr-79, and Arg-93. ATP contacts are provided by residues 94 to 96 (GLR), Glu-104, and 129 to 135 (VRPITAT).

It belongs to the bacterial CoaD family. As to quaternary structure, homohexamer. Requires Mg(2+) as cofactor.

It localises to the cytoplasm. The catalysed reaction is (R)-4'-phosphopantetheine + ATP + H(+) = 3'-dephospho-CoA + diphosphate. It functions in the pathway cofactor biosynthesis; coenzyme A biosynthesis; CoA from (R)-pantothenate: step 4/5. Its function is as follows. Reversibly transfers an adenylyl group from ATP to 4'-phosphopantetheine, yielding dephospho-CoA (dPCoA) and pyrophosphate. This is Phosphopantetheine adenylyltransferase from Nitrobacter hamburgensis (strain DSM 10229 / NCIMB 13809 / X14).